Here is a 58-residue protein sequence, read N- to C-terminus: Small integral membrane protein 11 (58 aa).

A helical transmembrane segment spans residues 9–29; that stretch reads FPLLLYILAAKTLILCLAFAG. Positions 29–58 form a coiled coil; that stretch reads GVKVYQRKRLEAKQQKVEAEKRKQAEKKES.

Its subcellular location is the membrane. The protein is Small integral membrane protein 11 (SMIM11) of Bos taurus (Bovine).